We begin with the raw amino-acid sequence, 305 residues long: MTHESDDPSLDWLEAELEDSLDEDFEIEFSEPMLSMEIRRIYKDQRPDLLDRQVYFRNLLRLQAELIKLQDWVQHTNSKVLIIMEGRDAAGKGGVIKRITQRLNPRIARVVALPAPSRREQSQWYFQRYVPYLPSGGEMVLFDRSWYNRAGVERVMGFATEDQVEQFFQDVPEFERMLVRSGIILLKYWFSITDEEQQLRFLMRVHDPMKQWKLSPMDLESRIRWEQYTKAKEQMFSRTNIPEAPWYIVEGNDKKRERLNCIEHLLSKIPYEDIPHEKVTLPDRRYNPDYERQVLPDELYVPKVY.

It belongs to the polyphosphate kinase 2 (PPK2) family. Class I subfamily.

It carries out the reaction [phosphate](n) + ATP = [phosphate](n+1) + ADP. The catalysed reaction is [phosphate](n) + CTP = [phosphate](n+1) + CDP. It catalyses the reaction [phosphate](n) + GTP = [phosphate](n+1) + GDP. The enzyme catalyses [phosphate](n) + UTP = [phosphate](n+1) + UDP. Shows little dependence on metals. Its function is as follows. Uses inorganic polyphosphate (polyP) as a donor to convert NDP to NTP. PolyP hydrolysis is slightly faster with GDP, but it can also use ADP, CDP and UDP. The chain is NDP-polyphosphate phosphotransferase 1 from Ruegeria pomeroyi (strain ATCC 700808 / DSM 15171 / DSS-3) (Silicibacter pomeroyi).